The chain runs to 753 residues: MTILNHTLGFPRVGLRRELKKAQESYWAGNSTREELLTVGRELRARHWDQQKQAGIDLLPVGDFAWYDHVLTTSLLLGNVPPRHQNKDGSVDIDTLFRIGRGRAPTGEPAAAAEMTKWFNTNYHYMVPEFVKGQQFKLTWTQLLEEVDEALALSHNVKPVLLGPVTYLWLGKVKGEQFDRLSLLNDILPVYQQVLAELAKRGIEWVQIDEPALVLELPQAWLDAYKPAYDALQGQVKLLLTTYFEGVTPNLDTITALPVQGLHVDLVHGKDDVVELHKRLPSDWLLSAGLINGRNVWRADLTEKYAQIKDIVGKRDLWVASSCSLLHSPIDLSVETRLDAEVKSWFAFALQKCHELALLRDALNSGDTAALAEWSAPIQARRHSTRVHNPAVEKRLAAITAQDSQRANVYEVRAEAQRARFKLPAWPTTTIGSFPQTTEIRTLRLDFKKGNLDANNYRTGIAEHIKQAIVEQERLGLDVLVHGEAERNDMVEYFGEHLDGFVFTQNGWVQSYGSRCVKPPIVIGDISRPAPITVEWAKYAQSLTDKPVKGMLTGPVTILCWSFPREDVSRETIAKQIALALRDEVADLEAAGIGIIQIDEPALREGLPLRRSDWDAYLQWGVEAFRINAAVAKDDTQIHTHMCYCEFNDIMDSIAALDADVITIETSRSDMELLESFEEFDYPNEIGPGVYDIHSPNVPSVEWIEALLKKAAKRIPAERLWVNPDCGLKTRGWPETRAALANMVQAAQNLRRG.

5-methyltetrahydropteroyltri-L-glutamate-binding positions include 17–20 (RELK) and Lys-117. L-homocysteine contacts are provided by residues 431–433 (IGS) and Glu-484. L-methionine contacts are provided by residues 431–433 (IGS) and Glu-484. 5-methyltetrahydropteroyltri-L-glutamate is bound by residues 515–516 (RC) and Trp-561. An L-homocysteine-binding site is contributed by Asp-599. Asp-599 contributes to the L-methionine binding site. Glu-605 serves as a coordination point for 5-methyltetrahydropteroyltri-L-glutamate. The Zn(2+) site is built by His-641, Cys-643, and Glu-665. The active-site Proton donor is the His-694. A Zn(2+)-binding site is contributed by Cys-726.

It belongs to the vitamin-B12 independent methionine synthase family. Zn(2+) serves as cofactor.

It carries out the reaction 5-methyltetrahydropteroyltri-L-glutamate + L-homocysteine = tetrahydropteroyltri-L-glutamate + L-methionine. It participates in amino-acid biosynthesis; L-methionine biosynthesis via de novo pathway; L-methionine from L-homocysteine (MetE route): step 1/1. Catalyzes the transfer of a methyl group from 5-methyltetrahydrofolate to homocysteine resulting in methionine formation. This is 5-methyltetrahydropteroyltriglutamate--homocysteine methyltransferase from Shigella flexneri serotype 5b (strain 8401).